Consider the following 800-residue polypeptide: MASLPAPPTPLGSCPRGRGGGRVVARPRRAGLACAARSCYRFRTDDDGVVDVAVSGEDGDGGGGGYAVSVEVPGTRGREGGLVLRASGSGEGVPLAPAAGGASLAAELSFDPTRAPFYLSFLLTDASGAEIRTHRKTSFRVPVGVGPGSPAPLGMSISGDGAVNFAVYSKNANAVSLYLYAAAVGGGGGDEPALEIDLDPYIHRTGNVWHVSLASVDGYVSYAFCCGGIRRPLLDPYAKVIGDFVSSNSVYDEGVTAPSMRCFASLAIAPSYNWGRDRHPRLPLEKLVVYRANVALFTKDRSSGLPDDAAGTFTGLSAKVEHFRSLGVNAILLEPVFPFHQVKGPYFPYHFFSPMNLYSSKGLSVSAIKSMKDMVRVMHRNGIEVLLEVVFTHTAEGESECQTISMRGIDNSSYYIANGIAGCKASILNCNHPVTQKLILDSLRHWVLDFHVDGFCFINAPFLVRGPGGEYLSRPPLLEAITFDPVLSMTKIIADPWSPLDISNVQFPFPHWKRWAEVNTRFSIDVRKFLKREALISDLATRLCGSGDLFSTRGPAFSFNHVSRNSGLSLVDLVSFSNDDLLSESSWNCGEEGPSENSAVLQTRLRQIRNFLFILFVSLGVPVLNMGDECGHSAAGSVSYKDRGPLNWRGMKTTFVKEVTGFISFLTALRSRRGDIFQRREFLKLENIHWYGSDLCEPGWDDPTSNFLCMHINAEVDEMAADSVRGDLYICFNANEESVSAALPALAEGSVWLRLVDTSLAFPGFFATESNPKVQQVPGLSSYHVEAHTCVLFESKSALA.

A compositionally biased stretch (pro residues) spans 1–10 (MASLPAPPTP). Residues 1–22 (MASLPAPPTPLGSCPRGRGGGR) are disordered. Residues 1–34 (MASLPAPPTPLGSCPRGRGGGRVVARPRRAGLAC) constitute a chloroplast transit peptide.

Belongs to the glycosyl hydrolase 13 family. Forms a hetero-hexamer composed of five ISA1 and one ISA2. Highly expressed in developing endosperm and leaves.

The protein resides in the plastid. It is found in the chloroplast. The catalysed reaction is Hydrolysis of (1-&gt;6)-alpha-D-glucosidic branch linkages in glycogen, amylopectin and their beta-limit dextrins.. Its function is as follows. Starch-debranching enzyme involved in amylopectin biosynthesis in endosperm. Functions by removing excess branches or improper branches that interfere with the formation of double helices of the cluster chains of amylopectin and crystallization of starch. Works together with ISA1 as heterooligomer. The heterooligomer ISA1 and ISA2 possesses higher affinity than the ISA1 homooligomer for various branched polyglucans in vitro, but no marked differences exist in chain preferences for debranching of amylopectin and phytoglycogen between these forms. This is Isoamylase 2, chloroplastic from Oryza sativa subsp. japonica (Rice).